We begin with the raw amino-acid sequence, 453 residues long: Glucose N-acetyltransferase 1-B (453 aa).

The Cytoplasmic segment spans residues 1 to 8; sequence MLKRKVRY. A helical; Signal-anchor for type II membrane protein transmembrane segment spans residues 9 to 29; it reads LLLIVVVFTGIILSVEAIMRF. Residues 30–453 lie on the Lumenal side of the membrane; sequence QLNKNVDYYL…LESRAICQVN (424 aa). N-linked (GlcNAc...) asparagine glycans are attached at residues Asn108, Asn126, and Asn176. Residues 187 to 189 carry the DXD motif; the sequence is DND.

Belongs to the GNT1 family.

The protein resides in the golgi apparatus membrane. It localises to the vacuole membrane. Functionally, N-acetylglucosaminyltransferase involved in the Golgi-specific modification of N-linked glycans. The polypeptide is Glucose N-acetyltransferase 1-B (GNT1-B) (Kluyveromyces lactis (strain ATCC 8585 / CBS 2359 / DSM 70799 / NBRC 1267 / NRRL Y-1140 / WM37) (Yeast)).